The primary structure comprises 800 residues: Phenylalanine--tRNA ligase beta subunit (800 aa).

In terms of domain architecture, tRNA-binding spans 39-154; it reads TKDIKNLVVG…EAQVPGTDAL (116 aa). The B5 domain maps to 408 to 483; sequence AFITPIDITA…RIYGYDDIPS (76 aa). Asp-461, Asp-467, Glu-470, and Glu-471 together coordinate Mg(2+). Residues 708-800 form the FDX-ACB domain; the sequence is PRFPGMSRDI…ALIEQGAVIR (93 aa).

Belongs to the phenylalanyl-tRNA synthetase beta subunit family. Type 1 subfamily. In terms of assembly, tetramer of two alpha and two beta subunits. Requires Mg(2+) as cofactor.

It is found in the cytoplasm. It catalyses the reaction tRNA(Phe) + L-phenylalanine + ATP = L-phenylalanyl-tRNA(Phe) + AMP + diphosphate + H(+). The sequence is that of Phenylalanine--tRNA ligase beta subunit from Staphylococcus aureus (strain USA300).